A 538-amino-acid chain; its full sequence is DALR anticodon-binding domain-containing protein 3 (538 aa).

In terms of assembly, part of a complex containing tRNA(Arg) and METTL2. Interacts with tRNA(Arg)(CCU) and tRNA(Arg)(UCU). Interacts with METTL2.

Its function is as follows. Involved in tRNA methylation. Facilitates the recognition and targeting of tRNA(Arg)(CCU) and tRNA(Arg)(UCU) substrates for N(3)-methylcytidine modification by METTL2. The sequence is that of DALR anticodon-binding domain-containing protein 3 (Dalrd3) from Rattus norvegicus (Rat).